The following is a 1375-amino-acid chain: DNA-directed RNA polymerase subunit beta (1375 aa).

The protein belongs to the RNA polymerase beta chain family. As to quaternary structure, the RNAP catalytic core consists of 2 alpha, 1 beta, 1 beta' and 1 omega subunit. When a sigma factor is associated with the core the holoenzyme is formed, which can initiate transcription.

It carries out the reaction RNA(n) + a ribonucleoside 5'-triphosphate = RNA(n+1) + diphosphate. In terms of biological role, DNA-dependent RNA polymerase catalyzes the transcription of DNA into RNA using the four ribonucleoside triphosphates as substrates. The protein is DNA-directed RNA polymerase subunit beta of Malacoplasma penetrans (strain HF-2) (Mycoplasma penetrans).